A 496-amino-acid chain; its full sequence is 1-aminocyclopropane-1-carboxylate synthase 4 (496 aa).

At Lys300 the chain carries N6-(pyridoxal phosphate)lysine.

The protein belongs to the class-I pyridoxal-phosphate-dependent aminotransferase family. It depends on pyridoxal 5'-phosphate as a cofactor. In terms of tissue distribution, expressed in leaves. Expressed in shoots and leaf blades. Expressed at low levels in leaf sheaths.

The enzyme catalyses S-adenosyl-L-methionine = 1-aminocyclopropane-1-carboxylate + S-methyl-5'-thioadenosine + H(+). Its pathway is alkene biosynthesis; ethylene biosynthesis via S-adenosyl-L-methionine; ethylene from S-adenosyl-L-methionine: step 1/2. Catalyzes the formation of 1-aminocyclopropane-1-carboxylate, a direct precursor of ethylene in higher plants. This is 1-aminocyclopropane-1-carboxylate synthase 4 from Oryza sativa subsp. japonica (Rice).